We begin with the raw amino-acid sequence, 781 residues long: Minor capsid protein VP1 (781 aa).

The tract at residues 5–80 is binding to the host cell receptor and internalization; that stretch reads SGKWWESDDK…KNSPDLYSHH (76 aa). Residues 77-111 form a disordered region; sequence YSHHFQSHGQLSDHPHALSSSSSHAEPRGENAVLS. A phospholipase A2-like region spans residues 123–181; sequence VQLPGTNYVGPGNELQAGPPQSAVDSAARIHDFRYSQLAKLGINPYTHWTVADEELLKN. Composition is skewed to polar residues over residues 524–535 and 542–553; these read VSTKEGDSSNTG and GLSTGTSQNTRI. The segment at 524-561 is disordered; sequence VSTKEGDSSNTGAGKALTGLSTGTSQNTRISLRPGPVS. The short motif at 720-730 is the Nuclear localization signal element; sequence KLGPRKATGRW.

It belongs to the parvoviridae capsid protein family. In terms of assembly, heteromultimer of isoform Minor capsid protein VP1, isoform Minor capsid protein VP2 and isoform Major capsid protein VP3. Heteromultimer of isoform Minor capsid protein VP1, isoform Minor capsid protein VP2 and isoform Major capsid protein VP3. 20 fold more abundant than the minor capsid protein VP1.

Its subcellular location is the virion. The protein resides in the host nucleus. The protein localises to the host cytoplasm. The catalysed reaction is a 1,2-diacyl-sn-glycero-3-phosphocholine + H2O = a 1-acyl-sn-glycero-3-phosphocholine + a fatty acid + H(+). Its function is as follows. Capsid protein self-assembles to form an icosahedral capsid with a T=1 symmetry, about 20 nm in diameter, and consisting of 60 copies of two size variants of the capsid proteins, VP1 and VP2, which differ by the presence of an N-terminal extension in the minor protein VP1. The capsid encapsulates the genomic ssDNA. Binds to erythroid progenitor cells expressing high levels of P antigen and uses host ITGA5-ITGB1 and XRCC5/Ku80 autoantigen as coreceptors on the cell surface to provide virion attachment to target cell. This attachment induces virion internalization predominantly through clathrin-dependent endocytosis. Binding to the host receptors also induces capsid rearrangements leading to surface exposure of VP1 N-terminus, specifically its phospholipase A2-like region. The additional N-terminal region of isoform Minor capsid protein VP1, called VP1u, may serve as a lipolytic enzyme to breach the endosomal membrane during entry into host cell and might contribute to virus transport to the nucleus. This chain is Minor capsid protein VP1 (vp), found in Human parvovirus B19 (strain HV) (HPV B19).